The chain runs to 426 residues: Glutamate-1-semialdehyde 2,1-aminomutase (426 aa).

Lys-265 carries the N6-(pyridoxal phosphate)lysine modification.

This sequence belongs to the class-III pyridoxal-phosphate-dependent aminotransferase family. HemL subfamily. The cofactor is pyridoxal 5'-phosphate.

The protein resides in the cytoplasm. It carries out the reaction (S)-4-amino-5-oxopentanoate = 5-aminolevulinate. Its pathway is porphyrin-containing compound metabolism; protoporphyrin-IX biosynthesis; 5-aminolevulinate from L-glutamyl-tRNA(Glu): step 2/2. This is Glutamate-1-semialdehyde 2,1-aminomutase from Hyperthermus butylicus (strain DSM 5456 / JCM 9403 / PLM1-5).